We begin with the raw amino-acid sequence, 89 residues long: MRNNVERRMQRVNEACRLLSKDTEMRRITDQNRQSRESEGTSPNSGKDGKDHFELTLNVRDFSPHELTVKTQGRRVIVTGKHERKSDTE.

2 stretches are compositionally biased toward basic and acidic residues: residues methionine 1–arginine 11 and leucine 19–glutamate 39. The interval methionine 1–leucine 55 is disordered. Positions serine 35–glutamate 89 constitute a sHSP domain.

It belongs to the small heat shock protein (HSP20) family.

This is Heat shock protein 30A (hsp30a) from Xenopus laevis (African clawed frog).